Consider the following 342-residue polypeptide: Phosphoribosylformylglycinamidine cyclo-ligase (342 aa).

This sequence belongs to the AIR synthase family.

The protein localises to the cytoplasm. It carries out the reaction 2-formamido-N(1)-(5-O-phospho-beta-D-ribosyl)acetamidine + ATP = 5-amino-1-(5-phospho-beta-D-ribosyl)imidazole + ADP + phosphate + H(+). It functions in the pathway purine metabolism; IMP biosynthesis via de novo pathway; 5-amino-1-(5-phospho-D-ribosyl)imidazole from N(2)-formyl-N(1)-(5-phospho-D-ribosyl)glycinamide: step 2/2. This chain is Phosphoribosylformylglycinamidine cyclo-ligase, found in Staphylococcus aureus (strain bovine RF122 / ET3-1).